Reading from the N-terminus, the 617-residue chain is Ceramide transfer protein (617 aa).

Positions Met1–Gly11 are enriched in polar residues. Residues Met1–Pro23 are disordered. In terms of domain architecture, PH spans Pro23–Ser117. A coiled-coil region spans residues Arg268–His302. The FFAT motif lies at Glu320 to Glu326. The interval Glu341–Ser382 is disordered. The START domain occupies Asp383–Ala611. Glu466, Gln487, Asn524, and Tyr572 together coordinate an N-acylsphing-4-enine.

The protein resides in the cytoplasm. Its subcellular location is the golgi apparatus. The protein localises to the endoplasmic reticulum. It carries out the reaction N-hexadecanoylsphing-4-enine(in) = N-hexadecanoylsphing-4-enine(out). Functionally, may mediate the intracellular trafficking of ceramide in a non-vesicular manner. This chain is Ceramide transfer protein (cert1), found in Xenopus laevis (African clawed frog).